The following is a 565-amino-acid chain: Ubiquitin carboxyl-terminal hydrolase 39 (565 aa).

2 stretches are compositionally biased toward basic and acidic residues: residues methionine 1 to serine 21 and valine 28 to glutamate 39. Disordered stretches follow at residues methionine 1–glutamate 61 and glutamate 75–aspartate 96. Serine 46 carries the post-translational modification Phosphoserine. Residue lysine 51 forms a Glycyl lysine isopeptide (Lys-Gly) (interchain with G-Cter in SUMO2) linkage. Serine 82 is subject to Phosphoserine. The segment covering glutamate 85–aspartate 96 has biased composition (basic and acidic residues). A UBP-type; degenerate zinc finger spans residues arginine 103–glutamine 200. Positions 136, 139, 155, and 161 each coordinate Zn(2+). The 331-residue stretch at valine 225 to arginine 555 folds into the USP domain.

Belongs to the peptidase C19 family. As to quaternary structure, the U4/U6-U5 tri-snRNP complex is a building block of the precatalytic spliceosome (spliceosome B complex). Component of the U4/U6-U5 tri-snRNP complex composed of the U4, U6 and U5 snRNAs and at least PRPF3, PRPF4, PRPF6, PRPF8, PRPF31, SNRNP200, TXNL4A, SNRNP40, SNRPB, SNRPD1, SNRPD2, SNRPD3, SNRPE, SNRPF, SNRPG, DDX23, CD2BP2, PPIH, SNU13, EFTUD2, SART1 and USP39, plus LSM2, LSM3, LSM4, LSM5, LSM6, LSM7 and LSM8.

It is found in the nucleus. The enzyme catalyses Thiol-dependent hydrolysis of ester, thioester, amide, peptide and isopeptide bonds formed by the C-terminal Gly of ubiquitin (a 76-residue protein attached to proteins as an intracellular targeting signal).. Its function is as follows. Deubiquitinating enzyme that plays a role in many cellular processes including cellular antiviral response, epithelial morphogenesis, DNA repair or B-cell development. Plays a role in pre-mRNA splicing as a component of the U4/U6-U5 tri-snRNP, one of the building blocks of the precatalytic spliceosome. Specifically regulates immunoglobulin gene rearrangement in a spliceosome-dependent manner, which involves modulating chromatin interactions at the Igh locus and therefore plays an essential role in B-cell development. Regulates AURKB mRNA levels, and thereby plays a role in cytokinesis and in the spindle checkpoint. Regulates apoptosis and G2/M cell cycle checkpoint in response to DNA damage by deubiquitinating and stabilizing CHK2. Also plays an important role in DNA repair by controlling the recruitment of XRCC4/LIG4 to DNA double-strand breaks for non-homologous end-joining repair. Participates in antiviral activity by affecting the type I IFN signaling by stabilizing STAT1 and decreasing its 'Lys-6'-linked ubiquitination. Contributes to non-canonical Wnt signaling during epidermal differentiation. Acts as a negative regulator NF-kappa-B activation through deubiquitination of 'Lys-48'-linked ubiquitination of NFKBIA. In Pongo abelii (Sumatran orangutan), this protein is Ubiquitin carboxyl-terminal hydrolase 39 (USP39).